The chain runs to 447 residues: Argininosuccinate synthase (447 aa).

ATP is bound by residues 12-20 and Ala39; that span reads AYSGGLDTS. Tyr92 and Ser97 together coordinate L-citrulline. Gly122 is an ATP binding site. Residues Thr124, Asn128, and Asp129 each coordinate L-aspartate. L-citrulline is bound at residue Asn128. L-citrulline contacts are provided by Arg132, Ser182, Ser191, Glu267, and Tyr279.

The protein belongs to the argininosuccinate synthase family. Type 1 subfamily. Homotetramer.

It is found in the cytoplasm. It catalyses the reaction L-citrulline + L-aspartate + ATP = 2-(N(omega)-L-arginino)succinate + AMP + diphosphate + H(+). It participates in amino-acid biosynthesis; L-arginine biosynthesis; L-arginine from L-ornithine and carbamoyl phosphate: step 2/3. The polypeptide is Argininosuccinate synthase (Sulfurovum sp. (strain NBC37-1)).